The chain runs to 231 residues: 7-cyano-7-deazaguanine synthase (231 aa).

8–18 (FSGGQDSTTCL) provides a ligand contact to ATP. Zn(2+) contacts are provided by Cys-188, Cys-197, Cys-200, and Cys-203.

The protein belongs to the QueC family. It depends on Zn(2+) as a cofactor.

The enzyme catalyses 7-carboxy-7-deazaguanine + NH4(+) + ATP = 7-cyano-7-deazaguanine + ADP + phosphate + H2O + H(+). Its pathway is purine metabolism; 7-cyano-7-deazaguanine biosynthesis. Functionally, catalyzes the ATP-dependent conversion of 7-carboxy-7-deazaguanine (CDG) to 7-cyano-7-deazaguanine (preQ(0)). The protein is 7-cyano-7-deazaguanine synthase of Shigella flexneri serotype 5b (strain 8401).